Reading from the N-terminus, the 222-residue chain is Protein-L-isoaspartate O-methyltransferase (222 aa).

The active site involves serine 68.

Belongs to the methyltransferase superfamily. L-isoaspartyl/D-aspartyl protein methyltransferase family.

Its subcellular location is the cytoplasm. It carries out the reaction [protein]-L-isoaspartate + S-adenosyl-L-methionine = [protein]-L-isoaspartate alpha-methyl ester + S-adenosyl-L-homocysteine. In terms of biological role, catalyzes the methyl esterification of L-isoaspartyl residues in peptides and proteins that result from spontaneous decomposition of normal L-aspartyl and L-asparaginyl residues. It plays a role in the repair and/or degradation of damaged proteins. The polypeptide is Protein-L-isoaspartate O-methyltransferase (Koribacter versatilis (strain Ellin345)).